The chain runs to 334 residues: Ornithine carbamoyltransferase (334 aa).

Residues 57–60, Q84, R108, and 135–138 each bind carbamoyl phosphate; these read STRT and HPTQ. Residues N169, D233, and 237 to 238 contribute to the L-ornithine site; that span reads SM. Residues 275–276 and R320 each bind carbamoyl phosphate; that span reads CL.

It belongs to the aspartate/ornithine carbamoyltransferase superfamily. OTCase family.

It localises to the cytoplasm. It carries out the reaction carbamoyl phosphate + L-ornithine = L-citrulline + phosphate + H(+). Its pathway is amino-acid biosynthesis; L-arginine biosynthesis; L-arginine from L-ornithine and carbamoyl phosphate: step 1/3. Functionally, reversibly catalyzes the transfer of the carbamoyl group from carbamoyl phosphate (CP) to the N(epsilon) atom of ornithine (ORN) to produce L-citrulline. In Pasteurella multocida (strain Pm70), this protein is Ornithine carbamoyltransferase (argF).